The primary structure comprises 274 residues: 3-deoxy-manno-octulosonate cytidylyltransferase (274 aa).

It belongs to the KdsB family.

It is found in the cytoplasm. The enzyme catalyses 3-deoxy-alpha-D-manno-oct-2-ulosonate + CTP = CMP-3-deoxy-beta-D-manno-octulosonate + diphosphate. The protein operates within nucleotide-sugar biosynthesis; CMP-3-deoxy-D-manno-octulosonate biosynthesis; CMP-3-deoxy-D-manno-octulosonate from 3-deoxy-D-manno-octulosonate and CTP: step 1/1. Its pathway is bacterial outer membrane biogenesis; lipopolysaccharide biosynthesis. In terms of biological role, activates KDO (a required 8-carbon sugar) for incorporation into bacterial lipopolysaccharide in Gram-negative bacteria. In Bordetella avium (strain 197N), this protein is 3-deoxy-manno-octulosonate cytidylyltransferase.